The chain runs to 333 residues: Acyl-CoA wax alcohol acyltransferase 2 (333 aa).

A run of 3 helical transmembrane segments spans residues 15–35 (VFAV…VIAV), 38–58 (YLVV…WLAF), and 130–150 (IFPG…MPFL).

The protein belongs to the diacylglycerol acyltransferase family. As to quaternary structure, monomer. In terms of tissue distribution, highly expressed in skin, where it is primarily restricted to undifferentiated peripheral sebocytes. Also expressed at lower level in other tissues except pancreas.

It is found in the endoplasmic reticulum membrane. The catalysed reaction is a long chain fatty alcohol + a fatty acyl-CoA = a wax ester + CoA. It carries out the reaction all-trans-retinol + an acyl-CoA = an all-trans-retinyl ester + CoA. It catalyses the reaction an acyl-CoA + a 1,2-diacyl-sn-glycerol = a triacyl-sn-glycerol + CoA. The enzyme catalyses 11-cis-retinol + a fatty acyl-CoA = 11-cis-retinyl ester + CoA. The catalysed reaction is 9-cis-retinol + a fatty acyl-CoA = 9-cis-retinyl ester + CoA. It carries out the reaction 13-cis-retinol + a fatty acyl-CoA = 13-cis-retinyl ester + CoA. It catalyses the reaction a 1-acylglycerol + an acyl-CoA = a 1,2-diacylglycerol + CoA. The enzyme catalyses 1-O-alkylglycerol + an acyl-CoA = 1-O-alkyl-3-acylglycerol + CoA. The catalysed reaction is a 2-acylglycerol + an acyl-CoA = a 1,2-diacyl-sn-glycerol + CoA. It carries out the reaction 2-(9Z-octadecenoyl)-glycerol + hexadecanoyl-CoA = 1-hexadecanoyl-2-(9Z-octadecenoyl)-sn-glycerol + CoA. It catalyses the reaction 1,2-di-(9Z-octadecenoyl)-sn-glycerol + hexadecanoyl-CoA = 1,2-di-(9Z)-octadecenoyl-3-hexadecanoyl-sn-glycerol + CoA. The enzyme catalyses hexadecan-1-ol + hexadecanoyl-CoA = hexadecanyl hexadecanoate + CoA. The catalysed reaction is hexadecane-1,2-diol + hexadecanoyl-CoA = 2-hydroxyhexadecyl hexadecanoate + CoA. It carries out the reaction 9-cis-retinol + hexadecanoyl-CoA = 9-cis-retinyl hexadecanoate + CoA. It catalyses the reaction all-trans-retinol + hexadecanoyl-CoA = all-trans-retinyl hexadecanoate + CoA. The enzyme catalyses 1,2-di-(9Z-octadecenoyl)-sn-glycerol + (9Z)-octadecenoyl-CoA = 1,2,3-tri-(9Z-octadecenoyl)-glycerol + CoA. The catalysed reaction is hexadecan-1-ol + (9Z)-octadecenoyl-CoA = hexadecanyl (9Z)-octadecenoate + CoA. It carries out the reaction (9Z)-hexadecen-1-ol + (9Z)-octadecenoyl-CoA = 1-O-(9Z)-hexadecenyl (9Z)-octadecenoate + CoA. It catalyses the reaction octadecan-1-ol + (9Z)-octadecenoyl-CoA = 1-O-octadecyl (9Z)-octadecenoate + CoA. The enzyme catalyses (9Z)-octadecen-1-ol + (9Z)-octadecenoyl-CoA = 1-O-(9Z)-octadecenyl (9Z)-octadecenoate + CoA. The catalysed reaction is hexadecan-1-ol + (9Z)-hexadecenoyl-CoA = 1-O-hexadecyl (9Z)-hexadecenoate + CoA. It carries out the reaction hexadecan-1-ol + octadecanoyl-CoA = hexadecanyl octadecanoate + CoA. It catalyses the reaction 11-cis-retinol + hexadecanoyl-CoA = 11-cis-retinyl hexadecanoate + CoA. The enzyme catalyses 1-O-(9Z-octadecenyl)-glycerol + (9Z)-octadecenoyl-CoA = 1-O-(9Z-octadecyl)-3-(9Z-octadecenoyl)-glycerol + CoA. The catalysed reaction is 1-(9Z-octadecenoyl)-glycerol + (9Z)-octadecenoyl-CoA = 1,2-di-(9Z-octadecenoyl)-glycerol + CoA. It carries out the reaction 11-cis-retinol + tetradecanoyl-CoA = 11-cis-retinyl tetradecanoate + CoA. It catalyses the reaction 9-cis-retinol + tetradecanoyl-CoA = 9-cis-retinyl tetradecanoate + CoA. The enzyme catalyses 13-cis-retinol + tetradecanoyl-CoA = 13-cis-retinyl tetradecanoate + CoA. The catalysed reaction is all-trans-retinol + tetradecanoyl-CoA = all-trans-retinyl tetradecanoate + CoA. It carries out the reaction tetradecan-1-ol + tetradecanoyl-CoA = tetradecanyl tetradecanoate + CoA. 11-cis retinoids act as allosteric modulators of acyl-CoA retinol O-fatty-acyltransferase (ARAT) activity by suppressing esterification of 9-cis, 13-cis, or all-trans retinols concurrently increasing the enzyme specificity toward 11-cis isomer. Its function is as follows. Acyltransferase that catalyzes the formation of ester bonds between fatty alcohols and fatty acyl-CoAs to form wax monoesters. Shows a preference for medium chain acyl-CoAs from C12 to C16 in length and fatty alcohols shorter than C20, as the acyl donors and acceptors, respectively. Also possesses acyl-CoA retinol acyltransferase (ARAT) activity that preferentially esterifies 11-cis-retinol, a chromophore precursor of bleached opsin pigments in cone cells. Shows higher catalytic efficiency toward 11-cis-retinol versus 9-cis-retinol, 13-cis-retinol, and all-trans-retinol substrates. The protein is Acyl-CoA wax alcohol acyltransferase 2 (AWAT2) of Homo sapiens (Human).